We begin with the raw amino-acid sequence, 1052 residues long: MAYLTDDKASGPEWALLLEQCISHRIISTEFRDFSVIMMRRHPISEKALIRIVLEARSATGLMWDPLIPLYVEVLQKLGYVSLPEILKTLLLFSTIYDDSHPVSKAGPNGKGVKRKKKTSTLMTDNKIIQNVMATITMGQGPKATRGATDVLCAVADWISTLLAWSPSGEGPESDQPGDILGHQDGACIFGSLGLLLVALVGTEKGVSALSSLSKKDRKCLGQALSSYTPICASYSLPLRNRLDSIQKDFNIYPSDSSKGLEESMMGDVNVAVLQFESNVVDIPTTSSRAGLYIYINALLAGRPLIDDSMFLNYLNNRYGGDHISMVEELITAAFDVLSNGMYRNESSKTMFLFRAFLVNKLPPFLAYMSASSMSQIPMEVCITRALSRVDPNTFPSFSETFSMQGNSVLSDVRQEFLFSCALHKLIPESSIERLLGENPMQTLPVGGQFMKDTLIAQINNNPERAEQLLNGIESMEGNAGAIVDAIIEVMHNLCSRKETMTLKSICNSLSRRPQTLDIILLFKSPSFILQPLCSLLDAWKWDEDQGESQLVYDEFGSILLLVLAFKYKYDLTPLDLGINKPDSFILRLLDTGASSQQLKDLTEKQNQNLGAWITALFVAEGISDESMSSCSPQEFYLLVATLFSQSLTACEAGKMEFETLKGGFEYLLEPFLLPALVMALTWLGNHIWESESDLETSLKILHGLVKPASISGEAQEIHRTVLCIASRTLEATLKDTRARHPSRTDISPILDVLEQYHSFRRTGATNQTELDSWRANPAGGGLVTSIRNTFSSLVLWSTDPEISMTPPSYTHRQMLAGIGHVGSERVLQGLIDELKLQTETGSGNLAFDIAATLICAPMAESFTLEQILYRQMDQDKYPLPGCRMLTLRDALGIQRESLSKLIEADPHRAELIIRLHRRVEALCSIPQIAPGDVDVGNIMDSIHLEAVGGDDEQREQHQQQQPDADQSNQGVVAPTGNTPGNLDAMLDAAASAVVADPNGTAGAEAAAGAGLLGNGVGGDAGVGIGTGMNDVFSLMDMGNPEFIDLDMEDML.

Residues 949–982 form a disordered region; it reads GGDDEQREQHQQQQPDADQSNQGVVAPTGNTPGN. Low complexity predominate over residues 959–970; sequence QQQQPDADQSNQ.

This sequence belongs to the Mediator complex subunit 5 family. Component of the Mediator complex.

The protein localises to the nucleus. In terms of biological role, component of the Mediator complex, a coactivator involved in the regulated transcription of nearly all RNA polymerase II-dependent genes. Mediator functions as a bridge to convey information from gene-specific regulatory proteins to the basal RNA polymerase II transcription machinery. Mediator is recruited to promoters by direct interactions with regulatory proteins and serves as a scaffold for the assembly of a functional preinitiation complex with RNA polymerase II and the general transcription factors. This chain is Mediator of RNA polymerase II transcription subunit 5 (NUT1), found in Coccidioides immitis (strain RS) (Valley fever fungus).